Consider the following 386-residue polypeptide: MNIHEYQAKEILRKYGVPTSTGLVVTKTEKINETIDKLNTEVYVVKAQIHAGGRGKAGGVKVVKSKEEAKKVAHDMFGINLVTHQTEPQGQKVNCLYIESGCDILKEYYFSIVFDRSASCITFIASTEGGVDIEEVAAKTPAKIIKFSVDPATGLQDFHMRGIAYELGFKDNQAKQMKEIVKSVYNAFVETDAAQIEINPLIVQTDGNLLALDAKITFDDNGLFKHPNITAMRDHDEEDPLETRAANAGLSYVKMGGNIGCMVNGAGLAMATMDIIKLYGASPANFLDVGGGADRERVKEALKIILSDKEVQGILVNIFGGIMRCDIIAEGIIAAAKDIGIKVPLVVRLAGTNVEKGEEILSNSGLDIIPAHDLADAANKIVAAIR.

In terms of domain architecture, ATP-grasp spans 9–244 (KEILRKYGVP…HDEEDPLETR (236 aa)). Residues lysine 46, 53 to 55 (GRG), glutamate 99, cysteine 102, and glutamate 107 each bind ATP. The Mg(2+) site is built by asparagine 199 and aspartate 213. Residues asparagine 264 and 321–323 (GIM) contribute to the substrate site.

Belongs to the succinate/malate CoA ligase beta subunit family. Heterotetramer of two alpha and two beta subunits. Mg(2+) is required as a cofactor.

It catalyses the reaction succinate + ATP + CoA = succinyl-CoA + ADP + phosphate. The catalysed reaction is GTP + succinate + CoA = succinyl-CoA + GDP + phosphate. Its pathway is carbohydrate metabolism; tricarboxylic acid cycle; succinate from succinyl-CoA (ligase route): step 1/1. Functionally, succinyl-CoA synthetase functions in the citric acid cycle (TCA), coupling the hydrolysis of succinyl-CoA to the synthesis of either ATP or GTP and thus represents the only step of substrate-level phosphorylation in the TCA. The beta subunit provides nucleotide specificity of the enzyme and binds the substrate succinate, while the binding sites for coenzyme A and phosphate are found in the alpha subunit. The polypeptide is Succinate--CoA ligase [ADP-forming] subunit beta (Rickettsia akari (strain Hartford)).